The sequence spans 372 residues: Glutamate 5-kinase (372 aa).

Position 14 (Lys-14) interacts with ATP. Residues Ser-54, Asp-141, and Asn-153 each contribute to the substrate site. An ATP-binding site is contributed by 173-174; it reads TD. Positions 280-358 constitute a PUA domain; that stretch reads RGTLTLDEGA…DEIEKLLGYV (79 aa).

It belongs to the glutamate 5-kinase family.

It is found in the cytoplasm. It catalyses the reaction L-glutamate + ATP = L-glutamyl 5-phosphate + ADP. The protein operates within amino-acid biosynthesis; L-proline biosynthesis; L-glutamate 5-semialdehyde from L-glutamate: step 1/2. In terms of biological role, catalyzes the transfer of a phosphate group to glutamate to form L-glutamate 5-phosphate. The sequence is that of Glutamate 5-kinase from Stutzerimonas stutzeri (strain A1501) (Pseudomonas stutzeri).